The sequence spans 344 residues: Heat-inducible transcription repressor HrcA (344 aa).

The protein belongs to the HrcA family.

Its function is as follows. Negative regulator of class I heat shock genes (grpE-dnaK-dnaJ and groELS operons). Prevents heat-shock induction of these operons. The protein is Heat-inducible transcription repressor HrcA of Streptococcus equi subsp. zooepidemicus (strain H70).